We begin with the raw amino-acid sequence, 148 residues long: Large ribosomal subunit protein uL15 (148 aa).

The disordered stretch occupies residues 1–51 (MNLSSLKPAEGAVKSRKRIGRGPGSGLGGTSTRGHKGAKSRSGYSKKIGFE). Residues 21 to 31 (RGPGSGLGGTS) show a composition bias toward gly residues.

It belongs to the universal ribosomal protein uL15 family. As to quaternary structure, part of the 50S ribosomal subunit.

Functionally, binds to the 23S rRNA. This chain is Large ribosomal subunit protein uL15, found in Porphyromonas gingivalis (strain ATCC BAA-308 / W83).